The sequence spans 630 residues: Eukaryotic translation initiation factor 2-alpha kinase 1 (630 aa).

Residues 1 to 40 form a disordered region; it reads MQGGNSGVRKREEEGDGAGAVAAPPAIDFPAEGPDPEYDE. The short motif at 85–104 is the SIFI-degron element; it reads LRSRQVFKLLCQTFIKMGLL. Positions 167–583 constitute a Protein kinase domain; the sequence is FEELAILGKG…AIQLLQSELF (417 aa). ATP-binding positions include 173 to 181 and K196; that span reads LGKGGYGRV. The disordered stretch occupies residues 259-301; that stretch reads DQEEDREQCGVKNDESSSSSIIFAEPTPEKEKRFGESDTENQN. A Phosphothreonine modification is found at T285. A compositionally biased stretch (basic and acidic residues) spans 285–294; that stretch reads TPEKEKRFGE. Residues 410–415 form an HRM 1 repeat; that stretch reads ACPYVM. The active-site Proton acceptor is the D442. Phosphothreonine; by autocatalysis is present on residues T486 and T488. At T493 the chain carries Phosphothreonine. An HRM 2 repeat occupies 552-557; it reads RCPVQA.

Belongs to the protein kinase superfamily. Ser/Thr protein kinase family. GCN2 subfamily. As to quaternary structure, synthesized in an inactive form that binds to the N-terminal domain of CDC37. Has to be associated with a multiprotein complex containing Hsp90, CDC37 and PPP5C for maturation and activation by autophosphorylation. The phosphatase PPP5C modulates this activation. Homodimer; homodimerizes in presence of heme, forming a disulfide-linked inactive homodimer. Interacts with DELE1; binds both to full-length DELE1 and processed form of DELE1 (S-DELE1) in response to stress, leading to activate its protein kinase activity and trigger the integrated stress response (ISR). In terms of processing, activated by autophosphorylation; phosphorylated predominantly on serine and threonine residues, but also on tyrosine residues. Autophosphorylation at Thr-488 is required for kinase activation. The active autophosphorylated form apparently is largely refractory to cellular heme fluctuations. Post-translationally, ubiquitinated and degraded by the SIFI complex once the mitochondrial stress has been resolved, thereby providing stress response silencing. Within the SIFI complex, UBR4 initiates ubiquitin chain that are further elongated or branched by KCMF1.

The enzyme catalyses L-seryl-[protein] + ATP = O-phospho-L-seryl-[protein] + ADP + H(+). The catalysed reaction is L-threonyl-[protein] + ATP = O-phospho-L-threonyl-[protein] + ADP + H(+). In normal conditions, the protein kinase activity is inhibited; inhibition is relieved by various stress conditions. Inhibited by heme: in presence of heme, forms a disulfide-linked inactive homodimer. Heme depletion relieves inhibition and stimulates kinase activity by autophosphorylation. Inhibited by the heme metabolites biliverdin and bilirubin. Induced by oxidative stress generated by arsenite treatment. Binding of nitric oxide (NO) to the heme iron in the N-terminal heme-binding domain activates the kinase activity, while binding of carbon monoxide (CO) suppresses kinase activity. Protein kinase activity is also activated upon binding to DELE1 in response to various stress, triggering the integrated stress response (ISR): activated by full-length DELE1 in response to iron deficiency, while it is activated by the processed form of DELE1 (S-DELE1) in response to mitochondrial stress. In terms of biological role, metabolic-stress sensing protein kinase that phosphorylates the alpha subunit of eukaryotic translation initiation factor 2 (EIF2S1/eIF-2-alpha) in response to various stress conditions. Key activator of the integrated stress response (ISR) required for adaptation to various stress, such as heme deficiency, oxidative stress, osmotic shock, mitochondrial dysfunction and heat shock. EIF2S1/eIF-2-alpha phosphorylation in response to stress converts EIF2S1/eIF-2-alpha in a global protein synthesis inhibitor, leading to a global attenuation of cap-dependent translation, while concomitantly initiating the preferential translation of ISR-specific mRNAs, such as the transcriptional activator ATF4, and hence allowing ATF4-mediated reprogramming. Acts as a key sensor of heme-deficiency: in normal conditions, binds hemin via a cysteine thiolate and histidine nitrogenous coordination, leading to inhibit the protein kinase activity. This binding occurs with moderate affinity, allowing it to sense the heme concentration within the cell: heme depletion relieves inhibition and stimulates kinase activity, activating the ISR. Thanks to this unique heme-sensing capacity, plays a crucial role to shut off protein synthesis during acute heme-deficient conditions. In red blood cells (RBCs), controls hemoglobin synthesis ensuring a coordinated regulation of the synthesis of its heme and globin moieties. It thereby plays an essential protective role for RBC survival in anemias of iron deficiency. Iron deficiency also triggers activation by full-length DELE1. Also activates the ISR in response to mitochondrial dysfunction: HRI/EIF2AK1 protein kinase activity is activated upon binding to the processed form of DELE1 (S-DELE1), thereby promoting the ATF4-mediated reprogramming. Also acts as an activator of mitophagy in response to mitochondrial damage: catalyzes phosphorylation of eIF-2-alpha (EIF2S1) following activation by S-DELE1, thereby promoting mitochondrial localization of EIF2S1, triggering PRKN-independent mitophagy. This chain is Eukaryotic translation initiation factor 2-alpha kinase 1, found in Homo sapiens (Human).